We begin with the raw amino-acid sequence, 71 residues long: Small ribosomal subunit protein bS21 (71 aa).

A compositionally biased stretch (basic residues) spans 49–59 (AAAAVKRHAKK). Positions 49–71 (AAAAVKRHAKKVQREQRRSVRLY) are disordered. Positions 60 to 71 (VQREQRRSVRLY) are enriched in basic and acidic residues.

It belongs to the bacterial ribosomal protein bS21 family.

In Stutzerimonas stutzeri (strain A1501) (Pseudomonas stutzeri), this protein is Small ribosomal subunit protein bS21.